The following is a 486-amino-acid chain: Protein nucleotidyltransferase YdiU (486 aa).

8 residues coordinate ATP: glycine 90, glycine 92, arginine 93, lysine 113, aspartate 125, glycine 126, arginine 176, and arginine 183. Aspartate 252 (proton acceptor) is an active-site residue. Positions 253 and 262 each coordinate Mg(2+). Aspartate 262 is an ATP binding site.

The protein belongs to the SELO family. Mg(2+) is required as a cofactor. Requires Mn(2+) as cofactor.

It carries out the reaction L-seryl-[protein] + ATP = 3-O-(5'-adenylyl)-L-seryl-[protein] + diphosphate. The enzyme catalyses L-threonyl-[protein] + ATP = 3-O-(5'-adenylyl)-L-threonyl-[protein] + diphosphate. It catalyses the reaction L-tyrosyl-[protein] + ATP = O-(5'-adenylyl)-L-tyrosyl-[protein] + diphosphate. The catalysed reaction is L-histidyl-[protein] + UTP = N(tele)-(5'-uridylyl)-L-histidyl-[protein] + diphosphate. It carries out the reaction L-seryl-[protein] + UTP = O-(5'-uridylyl)-L-seryl-[protein] + diphosphate. The enzyme catalyses L-tyrosyl-[protein] + UTP = O-(5'-uridylyl)-L-tyrosyl-[protein] + diphosphate. In terms of biological role, nucleotidyltransferase involved in the post-translational modification of proteins. It can catalyze the addition of adenosine monophosphate (AMP) or uridine monophosphate (UMP) to a protein, resulting in modifications known as AMPylation and UMPylation. In Pseudomonas putida (strain ATCC 47054 / DSM 6125 / CFBP 8728 / NCIMB 11950 / KT2440), this protein is Protein nucleotidyltransferase YdiU.